A 336-amino-acid chain; its full sequence is Holliday junction branch migration complex subunit RuvB (336 aa).

Residues 1 to 183 are large ATPase domain (RuvB-L); sequence MTEEHLTSQE…FGIVEHMQYY (183 aa). Residues L22, R23, G64, K67, T68, T69, 130-132, R173, Y183, and R220 each bind ATP; that span reads EDF. T68 contacts Mg(2+). Positions 184–254 are small ATPAse domain (RuvB-S); sequence QVEDLEKIIL…TTAMALKQLQ (71 aa). Positions 257 to 336 are head domain (RuvB-H); that stretch reads SAGLDQTDRK…LNLPLPGEEE (80 aa). DNA contacts are provided by R293 and R317.

This sequence belongs to the RuvB family. In terms of assembly, homohexamer. Forms an RuvA(8)-RuvB(12)-Holliday junction (HJ) complex. HJ DNA is sandwiched between 2 RuvA tetramers; dsDNA enters through RuvA and exits via RuvB. An RuvB hexamer assembles on each DNA strand where it exits the tetramer. Each RuvB hexamer is contacted by two RuvA subunits (via domain III) on 2 adjacent RuvB subunits; this complex drives branch migration. In the full resolvosome a probable DNA-RuvA(4)-RuvB(12)-RuvC(2) complex forms which resolves the HJ.

The protein localises to the cytoplasm. The enzyme catalyses ATP + H2O = ADP + phosphate + H(+). Its function is as follows. The RuvA-RuvB-RuvC complex processes Holliday junction (HJ) DNA during genetic recombination and DNA repair, while the RuvA-RuvB complex plays an important role in the rescue of blocked DNA replication forks via replication fork reversal (RFR). RuvA specifically binds to HJ cruciform DNA, conferring on it an open structure. The RuvB hexamer acts as an ATP-dependent pump, pulling dsDNA into and through the RuvAB complex. RuvB forms 2 homohexamers on either side of HJ DNA bound by 1 or 2 RuvA tetramers; 4 subunits per hexamer contact DNA at a time. Coordinated motions by a converter formed by DNA-disengaged RuvB subunits stimulates ATP hydrolysis and nucleotide exchange. Immobilization of the converter enables RuvB to convert the ATP-contained energy into a lever motion, pulling 2 nucleotides of DNA out of the RuvA tetramer per ATP hydrolyzed, thus driving DNA branch migration. The RuvB motors rotate together with the DNA substrate, which together with the progressing nucleotide cycle form the mechanistic basis for DNA recombination by continuous HJ branch migration. Branch migration allows RuvC to scan DNA until it finds its consensus sequence, where it cleaves and resolves cruciform DNA. The chain is Holliday junction branch migration complex subunit RuvB from Lactobacillus delbrueckii subsp. bulgaricus (strain ATCC 11842 / DSM 20081 / BCRC 10696 / JCM 1002 / NBRC 13953 / NCIMB 11778 / NCTC 12712 / WDCM 00102 / Lb 14).